The primary structure comprises 184 residues: ESX-1 secretion-associated protein EspD (184 aa).

The interval 33–56 (IGVGSAATPDTGPDLDNAHGQAET) is disordered.

It localises to the secreted. In terms of biological role, required for ESX-1 function. Required for the maintenance of adequate cellular levels of both EspA and EspC. Facilitates EsxA secretion. The protein is ESX-1 secretion-associated protein EspD of Mycobacterium tuberculosis (strain CDC 1551 / Oshkosh).